The chain runs to 197 residues: MALPGTLRFGVLMALPGALASGADPEDGVGSSVVTIVLLLLLLLLLVTALALAWRRLSHASGGYYHPARLGAALWGHTCRLLWASPAGRWLRARTELESPEESGPPEDEEDAEDFVIDGGPEEAAAKEEEQRCQAEQTRDPRDTDSDGGLGLSSQGPVGSGSSAEALLSDLHAFSGSAAWDDSAGGAGGQGLRVTAL.

The chain crosses the membrane as a helical span at residues 33 to 53 (VVTIVLLLLLLLLLVTALALA). Phosphoserine occurs at positions 99 and 103. Disordered regions lie at residues 120–164 (GPEE…GSSA) and 177–197 (SAAW…VTAL). Residues 124-145 (AAAKEEEQRCQAEQTRDPRDTD) are compositionally biased toward basic and acidic residues.

As to quaternary structure, interacts with CD45/PTPRC. Post-translationally, phosphorylated on tyrosine residues. Leukocyte-specific. Expressed in B- and T-cell lines, in spleen, thymus, and bone marrow of adult mice, and in embryos.

It localises to the membrane. The sequence is that of Protein tyrosine phosphatase receptor type C-associated protein (Ptprcap) from Mus musculus (Mouse).